The following is a 461-amino-acid chain: Demethyllactenocin mycarosyltransferase (461 aa).

Residues 1–21 (MAGLRPGAGVPPGTPWPISPG) are disordered.

It belongs to the UDP-glycosyltransferase family.

The enzyme catalyses dTDP-beta-L-mycarose + demethyllactenocin = demethylmacrocin + dTDP + H(+). In terms of biological role, involved in the biosynthesis of mycarose which is a 6-deoxyhexose sugar required during production of the macrolide antibiotic tylosin. Catalyzes the transfer of L-mycarosyl from dTDP-beta-L-mycarose to demethyllactenocin to yield demethylmacrocin. The polypeptide is Demethyllactenocin mycarosyltransferase (tylCV) (Streptomyces fradiae (Streptomyces roseoflavus)).